Reading from the N-terminus, the 614-residue chain is Translation initiation factor IF-2 (614 aa).

Residues 115-283 (ARAPIVTIMG…ILLIAELNDY (169 aa)) form the tr-type G domain. The G1 stretch occupies residues 124-131 (GHVDHGKT). 124-131 (GHVDHGKT) is a GTP binding site. Positions 149–153 (GITQH) are G2. Residues 170 to 173 (DTPG) form a G3 region. Residues 170-174 (DTPGH) and 224-227 (NKMD) contribute to the GTP site. The interval 224 to 227 (NKMD) is G4. The interval 260 to 262 (SAL) is G5.

Belongs to the TRAFAC class translation factor GTPase superfamily. Classic translation factor GTPase family. IF-2 subfamily.

The protein localises to the cytoplasm. One of the essential components for the initiation of protein synthesis. Protects formylmethionyl-tRNA from spontaneous hydrolysis and promotes its binding to the 30S ribosomal subunits. Also involved in the hydrolysis of GTP during the formation of the 70S ribosomal complex. This chain is Translation initiation factor IF-2, found in Ureaplasma urealyticum serovar 10 (strain ATCC 33699 / Western).